The chain runs to 380 residues: O-methyltransferase ucdC (380 aa).

S-adenosyl-L-methionine is bound by residues 222-223 (GG), aspartate 247, and arginine 283. Catalysis depends on histidine 287, which acts as the Proton acceptor.

It belongs to the class I-like SAM-binding methyltransferase superfamily. Cation-independent O-methyltransferase family. COMT subfamily.

It participates in secondary metabolite biosynthesis. In terms of biological role, nonribosomal peptide synthetase that mediates the biosynthesis of usterphenyllins and uscandidusins, p-terphenyl derivatives. Within the pathway, ucdC catalyzes O-methylation of the terphenyl triol intermediate produced by ucdB to yield terphenyllin carrying two methoxy moieties at C-9 and C-12. The pathway begin with the biosynthesis of 4-hydroxyphenylpyruvate (HPPA) from L-tyrosine, possibly by the aminotransferase ucdG. The nonribosomal peptide synthetase ucdA then condenses two HPPA units to produce atromentin. The key step in this pathway is the reduction and dehydration of atromentin to form a terphenyl triol intermediate, performed by the NAD-dependent dehydrogenase ucdB. Further O-methylation by the methyltransferase ucdC forms terphenyllin carrying two methoxy moieties at C-9 and C-12, and subsequent dihydroxylation at C-3 of ring A and C-15 of ring C by the flavin-dependent oxygenase ucdD leads to 3,15-dihydroxyterphenyllin. Prenylation by ucdE at position C-5 of ring A forms usterphenyllin B, and is followed by a second prenylation at position C-14 of ring C to form usterphenyllin A. The following furan ring formation that leads to uscandidusins A and B was proven to be an unexpected spontaneous non-enzymatic reaction. The chain is O-methyltransferase ucdC from Aspergillus ustus.